Consider the following 135-residue polypeptide: Transcriptional regulator HosA (135 aa).

Residues 4–134 (RNKAFHQLRQ…FMQLVRKMMN (131 aa)) form the HTH marR-type domain. A DNA-binding region (H-T-H motif) is located at residues 48–71 (QVALIEAAVSTKATLAEMLARMEN).

Involved in the temperature-dependent positive control of flagellum-driven swimming motility and cellular aggregation. Regulates fliC expression by directly interacting with fliC promoter. This chain is Transcriptional regulator HosA (hosA), found in Escherichia coli O127:H6 (strain E2348/69 / EPEC).